The primary structure comprises 126 residues: Fluoride-specific ion channel FluC (126 aa).

Helical transmembrane passes span 4-24 (LLLVCLGGALGSGARYLTSAW), 36-56 (GTLLVNVSGSFLLAGIMTASL), 67-85 (LFLAAGVMGGFTTYSSFNY), and 101-121 (AYLLATVLGCLAAAFAATLLV). Residues glycine 75 and threonine 78 each coordinate Na(+).

It belongs to the fluoride channel Fluc/FEX (TC 1.A.43) family.

Its subcellular location is the cell inner membrane. It catalyses the reaction fluoride(in) = fluoride(out). Na(+) is not transported, but it plays an essential structural role and its presence is essential for fluoride channel function. Fluoride-specific ion channel. Important for reducing fluoride concentration in the cell, thus reducing its toxicity. The polypeptide is Fluoride-specific ion channel FluC (Anaeromyxobacter dehalogenans (strain 2CP-1 / ATCC BAA-258)).